Here is a 297-residue protein sequence, read N- to C-terminus: GTPase Era (297 aa).

Positions 7–174 (RSGFVSIVGR…VQLVHGLLPE (168 aa)) constitute an Era-type G domain. The segment at 15–22 (GRPNVGKS) is G1. 15 to 22 (GRPNVGKS) contacts GTP. The G2 stretch occupies residues 41–45 (QTTRN). Residues 62–65 (DTPG) are G3. GTP contacts are provided by residues 62-66 (DTPGI) and 124-127 (NKID). Positions 124–127 (NKID) are G4. Residues 153 to 155 (VSA) are G5. One can recognise a KH type-2 domain in the interval 205–282 (THDEVPYSTA…FLELFVRVSG (78 aa)).

The protein belongs to the TRAFAC class TrmE-Era-EngA-EngB-Septin-like GTPase superfamily. Era GTPase family. As to quaternary structure, monomer.

The protein localises to the cytoplasm. Its subcellular location is the cell inner membrane. Functionally, an essential GTPase that binds both GDP and GTP, with rapid nucleotide exchange. Plays a role in 16S rRNA processing and 30S ribosomal subunit biogenesis and possibly also in cell cycle regulation and energy metabolism. The sequence is that of GTPase Era from Geobacter sp. (strain M21).